The primary structure comprises 258 residues: Imidazole glycerol phosphate synthase subunit HisF (258 aa).

Residues Asp12 and Asp131 contribute to the active site.

It belongs to the HisA/HisF family. Heterodimer of HisH and HisF.

Its subcellular location is the cytoplasm. It carries out the reaction 5-[(5-phospho-1-deoxy-D-ribulos-1-ylimino)methylamino]-1-(5-phospho-beta-D-ribosyl)imidazole-4-carboxamide + L-glutamine = D-erythro-1-(imidazol-4-yl)glycerol 3-phosphate + 5-amino-1-(5-phospho-beta-D-ribosyl)imidazole-4-carboxamide + L-glutamate + H(+). It functions in the pathway amino-acid biosynthesis; L-histidine biosynthesis; L-histidine from 5-phospho-alpha-D-ribose 1-diphosphate: step 5/9. Functionally, IGPS catalyzes the conversion of PRFAR and glutamine to IGP, AICAR and glutamate. The HisF subunit catalyzes the cyclization activity that produces IGP and AICAR from PRFAR using the ammonia provided by the HisH subunit. In Nitrosomonas eutropha (strain DSM 101675 / C91 / Nm57), this protein is Imidazole glycerol phosphate synthase subunit HisF.